The sequence spans 198 residues: Inner membrane-spanning protein YciB (198 aa).

5 helical membrane passes run 36-56 (IYSA…ALFL), 64-84 (GQLL…AFHS), 90-110 (WKAP…HFIG), 135-155 (VAWI…AFTF), and 162-182 (FKVF…GVYL).

The protein belongs to the YciB family.

It localises to the cell inner membrane. Plays a role in cell envelope biogenesis, maintenance of cell envelope integrity and membrane homeostasis. This chain is Inner membrane-spanning protein YciB, found in Pseudomonas entomophila (strain L48).